The chain runs to 25 residues: Androctonin (25 aa).

Cystine bridges form between cysteine 4–cysteine 20 and cysteine 10–cysteine 16.

The protein resides in the secreted. In terms of biological role, active against both bacteria (Gram-positive and Gram-negative) and filamentous fungi. Acts on the membrane of the bacterial cells. It destabilize a membrane by modifying its properties. This chain is Androctonin, found in Androctonus australis (Sahara scorpion).